We begin with the raw amino-acid sequence, 361 residues long: MSSVRTAVRRMKPYVPGKPVEDVQRELGLHDLVKLNQNENPLGPSPRAVAAARAAMAQVHTYPEGTARRLRERLAQMWNLPADWFLIGNGSDEVFRLLAEVYLEPGDRVVVPEPSFAAYRFVAELMGAEVVAVPLAGWTMDLPAMAEAAARGAKLLFLCRPNNPTGTVFAEADLRAALERVPPSTLVVVDEAYREFDETPFDSRALVQDYPNVVIARTFSKIYGMAGFRLGYGVMRPEVLAPLYTARDPFSVNGLAVAAGLAALDDVEHVERTRALTREGKAYLYAAFQRLGLGYVPSEANFVLFDAGRPAAEVFDALLRRGVLVRPCGSFGLPDHLRVTVGTPEQNRRFVEALKAALGEG.

At K221 the chain carries N6-(pyridoxal phosphate)lysine.

This sequence belongs to the class-II pyridoxal-phosphate-dependent aminotransferase family. Histidinol-phosphate aminotransferase subfamily. Homodimer. It depends on pyridoxal 5'-phosphate as a cofactor.

The enzyme catalyses L-histidinol phosphate + 2-oxoglutarate = 3-(imidazol-4-yl)-2-oxopropyl phosphate + L-glutamate. Its pathway is amino-acid biosynthesis; L-histidine biosynthesis; L-histidine from 5-phospho-alpha-D-ribose 1-diphosphate: step 7/9. The polypeptide is Histidinol-phosphate aminotransferase (Symbiobacterium thermophilum (strain DSM 24528 / JCM 14929 / IAM 14863 / T)).